A 70-amino-acid chain; its full sequence is DNA-directed RNA polymerase subunit omega (70 aa).

The protein belongs to the RNA polymerase subunit omega family. The RNAP catalytic core consists of 2 alpha, 1 beta, 1 beta' and 1 omega subunit. When a sigma factor is associated with the core the holoenzyme is formed, which can initiate transcription.

It catalyses the reaction RNA(n) + a ribonucleoside 5'-triphosphate = RNA(n+1) + diphosphate. Its function is as follows. Promotes RNA polymerase assembly. Latches the N- and C-terminal regions of the beta' subunit thereby facilitating its interaction with the beta and alpha subunits. In Bacillus cereus (strain B4264), this protein is DNA-directed RNA polymerase subunit omega.